A 62-amino-acid chain; its full sequence is UPF0291 protein CLB_2550 (62 aa).

It belongs to the UPF0291 family.

Its subcellular location is the cytoplasm. This Clostridium botulinum (strain ATCC 19397 / Type A) protein is UPF0291 protein CLB_2550.